Here is a 409-residue protein sequence, read N- to C-terminus: Putative fatty acyl-CoA reductase 7 (409 aa).

This sequence belongs to the fatty acyl-CoA reductase family.

In Arabidopsis thaliana (Mouse-ear cress), this protein is Putative fatty acyl-CoA reductase 7 (FAR7).